A 223-amino-acid polypeptide reads, in one-letter code: Cytidylate kinase (223 aa).

Residue 10-18 (GPASSGKST) coordinates ATP.

It belongs to the cytidylate kinase family. Type 1 subfamily.

It localises to the cytoplasm. The catalysed reaction is CMP + ATP = CDP + ADP. It carries out the reaction dCMP + ATP = dCDP + ADP. In Streptococcus pneumoniae (strain Hungary19A-6), this protein is Cytidylate kinase.